A 279-amino-acid chain; its full sequence is tRNA dimethylallyltransferase (279 aa).

10–17 (GPTASGKS) contributes to the ATP binding site. 12 to 17 (TASGKS) contributes to the substrate binding site.

This sequence belongs to the IPP transferase family. In terms of assembly, monomer. Requires Mg(2+) as cofactor.

It carries out the reaction adenosine(37) in tRNA + dimethylallyl diphosphate = N(6)-dimethylallyladenosine(37) in tRNA + diphosphate. Functionally, catalyzes the transfer of a dimethylallyl group onto the adenine at position 37 in tRNAs that read codons beginning with uridine, leading to the formation of N6-(dimethylallyl)adenosine (i(6)A). The sequence is that of tRNA dimethylallyltransferase from Roseobacter denitrificans (strain ATCC 33942 / OCh 114) (Erythrobacter sp. (strain OCh 114)).